The primary structure comprises 313 residues: MTFIKRLEDAYETLLGNYPAGVSSTSTSKYNEIRKIVSEAFLIGENEVYVTGTSRRISNLDTRFAQGNQRNKHTRMAVAFISIPSVDDSELDELIIRTRNSAITTSSKFCNGEERGTIFDGILLFLVFEGETKVYPLAFLVFENDFELKEKAEELIPGIELKEYPRANQSPAQENNKSAKNEDEESAKSYVVFLDIEEDGSIVEFVEDKDKTYRIGDMIWTASHTNGSSAITRRLEVIEVVENLVVCKIKHKYNEPVDKNSLLKFVNIEQDLISFLDLHPNVQNGSEGFVSGDIVDENATTSSDDLPEDFENN.

Positions 289–313 (FVSGDIVDENATTSSDDLPEDFENN) are disordered.

BsuMI restriction activity requires YdiR, YdiS and YdjA.

It carries out the reaction Endonucleolytic cleavage of DNA to give specific double-stranded fragments with terminal 5'-phosphates.. Its function is as follows. A P subtype restriction enzyme that recognizes the double-stranded sequence 5'-CTCGAG-3'; the cleavage site is unknown. The polypeptide is Type II restriction enzyme BsuMI component YdiR (ydiR) (Bacillus subtilis (strain 168)).